Consider the following 475-residue polypeptide: Ornithine aminotransferase, mitochondrial (475 aa).

The transit peptide at 1–16 directs the protein to the mitochondrion; that stretch reads MAATTRRLLYYVSKRF. Residues 23–43 form a disordered region; sequence RSYGGLPQSNSKSPPSSSQRL. The span at 29–41 shows a compositional bias: low complexity; the sequence is PQSNSKSPPSSSQ. Residues 142–143 and Phe-177 contribute to the pyridoxal 5'-phosphate site; that span reads GA. Arg-180 provides a ligand contact to L-ornithine. 265–268 contributes to the pyridoxal 5'-phosphate binding site; the sequence is DEVQ. An N6-(pyridoxal phosphate)lysine modification is found at Lys-294. Ser-323 lines the L-ornithine pocket. Thr-324 is a binding site for pyridoxal 5'-phosphate.

The protein belongs to the class-III pyridoxal-phosphate-dependent aminotransferase family. In terms of assembly, homotetramer. Pyridoxal 5'-phosphate is required as a cofactor.

It localises to the mitochondrion matrix. The catalysed reaction is a 2-oxocarboxylate + L-ornithine = L-glutamate 5-semialdehyde + an L-alpha-amino acid. It functions in the pathway amino-acid biosynthesis; L-proline biosynthesis; L-glutamate 5-semialdehyde from L-ornithine: step 1/1. Mediates degradation of arginine for nitrogen recycling. Plays a role in non-host disease resistance by regulating pyrroline-5-carboxylate metabolism-induced hypersensitive response. The chain is Ornithine aminotransferase, mitochondrial from Arabidopsis thaliana (Mouse-ear cress).